Reading from the N-terminus, the 388-residue chain is Succinate--CoA ligase [ADP-forming] subunit beta (388 aa).

In terms of domain architecture, ATP-grasp spans 9–244 (KALFAEYGLP…PSQDDAREAH (236 aa)). ATP is bound by residues K46, 53–55 (GRG), E99, T102, and E107. Mg(2+) contacts are provided by N199 and D213. Substrate-binding positions include N264 and 321 to 323 (GIV).

It belongs to the succinate/malate CoA ligase beta subunit family. As to quaternary structure, heterotetramer of two alpha and two beta subunits. The cofactor is Mg(2+).

The enzyme catalyses succinate + ATP + CoA = succinyl-CoA + ADP + phosphate. It catalyses the reaction GTP + succinate + CoA = succinyl-CoA + GDP + phosphate. Its pathway is carbohydrate metabolism; tricarboxylic acid cycle; succinate from succinyl-CoA (ligase route): step 1/1. In terms of biological role, succinyl-CoA synthetase functions in the citric acid cycle (TCA), coupling the hydrolysis of succinyl-CoA to the synthesis of either ATP or GTP and thus represents the only step of substrate-level phosphorylation in the TCA. The beta subunit provides nucleotide specificity of the enzyme and binds the substrate succinate, while the binding sites for coenzyme A and phosphate are found in the alpha subunit. The polypeptide is Succinate--CoA ligase [ADP-forming] subunit beta (Shewanella loihica (strain ATCC BAA-1088 / PV-4)).